The primary structure comprises 310 residues: Thioesterase pytI (310 aa).

A run of 2 helical transmembrane segments spans residues 14–34 (SLTPLILIHAISGLALPYFAL) and 95–115 (LLGGWSMGGMLAIEMAAIFVA). The disordered stretch occupies residues 168–195 (TLSDDASTTTSSDNSRASTDHGADSEVE). Residues 170-184 (SDDASTTTSSDNSRA) are compositionally biased toward low complexity.

This sequence belongs to the AMT4 thioesterase family.

The protein localises to the membrane. It functions in the pathway secondary metabolite biosynthesis. Its function is as follows. Thioesterase; part of the gene cluster that mediates the biosynthesis of pyranterreones, a family of antioxidative compounds. The first step of pyranonigrins biosynthesis is performed by the hybrid PKS-NRPS synthetase pytA that condenses 4 malonyl-CoA units ato the acetyl starter unit by the modular PKS of pytA. The acyl chain is then connected to an L-serine through the amide bond by the modular NRPS of pytA. A tetramic acid is formed and released from the PKS-NRPS pytA to give pyranterreone 5 with the help of the thioesterase pytI. Pyranterreone 5 could be methylated by pytC to afford pyranterreone 6. Both pyranterreones 5 and 6 are subsequently oxidized by the FAD-linked oxidoreductase pytB and the cytochrome P450 monooxygenase pytD to form the fused gamma-pyrone core, resulting in pyranterreones 7 and 11, respectively. The hydroxy group at C-8 of pyranterreones 7 and 11 are dehydrated by the aspartyl protease pytH to form a delta-7 double bond to give pyranterreones 3 and 1, 2 accordingly. The exo-methylene of pyranterreone 3 could be reduced into a pendant methyl by reductase pytE to provide pyranterreone 4, also known as cordylactam. Pyranterreone 4 can be reconverted to pyranterreone 3 through pytB-catalyzed dehydrogenation or further oxidized to pyranterreones 9 and 10. The protein is Thioesterase pytI of Aspergillus terreus.